Consider the following 500-residue polypeptide: Metacaspase-5 (500 aa).

An N-terminal signal peptide occupies residues 1–18 (MDAALALLFGQVATAVLP). The tract at residues 19-63 (YVVNSIGRVPRPKRVDVKKAMGEAHQCRPVVPYRAPRPYTEGRVK) is important for catalytic activity. N-linked (GlcNAc...) asparagine glycosylation is found at Asn70 and Asn113. The active site involves His147. Residues Asp162, Asp178, and Asp179 each coordinate Ca(2+). Cys202 is an active-site residue. Asp209 contacts Ca(2+). Asn219, Asn235, Asn258, Asn264, Asn283, and Asn332 each carry an N-linked (GlcNAc...) asparagine glycan. 2 disordered regions span residues 358 to 419 (EATL…QAYY) and 444 to 500 (QPPQ…PGRK). Residues 379 to 389 (ASTSNGKSNPG) show a composition bias toward polar residues. A compositionally biased stretch (low complexity) spans 444–461 (QPPQQAYYQPPQQAYYQP).

This sequence belongs to the peptidase C14B family.

It localises to the recycling endosome. Its function is as follows. Cysteine protease that cleaves specifically after arginine or lysine residues. This chain is Metacaspase-5, found in Trypanosoma brucei brucei.